Here is a 201-residue protein sequence, read N- to C-terminus: CDP-diacylglycerol--serine O-phosphatidyltransferase (201 aa).

6 helical membrane-spanning segments follow: residues 19 to 39 (IITGLLAILLNSFSLIYLSII), 57 to 77 (FGAELDSISDVVSFGVAPAYL), 88 to 108 (LISAIIFCLCGALRLARFGIL), 112 to 132 (GFIGLPIPAGALLLVGFCQLI), 133 to 153 (NSYLINSILAILIGLLMISDI), and 162 to 182 (IFIYIFAVSLCLAIVGIPHFA).

The protein belongs to the CDP-alcohol phosphatidyltransferase class-I family.

The protein resides in the cell membrane. The catalysed reaction is a CDP-1,2-diacyl-sn-glycerol + L-serine = a 1,2-diacyl-sn-glycero-3-phospho-L-serine + CMP + H(+). This chain is CDP-diacylglycerol--serine O-phosphatidyltransferase (pssA), found in Methanocaldococcus jannaschii (strain ATCC 43067 / DSM 2661 / JAL-1 / JCM 10045 / NBRC 100440) (Methanococcus jannaschii).